Here is a 213-residue protein sequence, read N- to C-terminus: Adenylate kinase (213 aa).

ATP is bound at residue 10–15 (GAGKGT). Residues 30-59 (STGDMFRAAIKEGTEMGKKAKEYMDKGALV) form an NMP region. AMP is bound by residues Thr31, Arg36, 57 to 59 (ALV), 85 to 88 (GFPR), and Gln92. Residues 126–163 (GRRVCKNCGASYHVIFNPPQAEGKCNSCNGELYQRSDD) form an LID region. ATP is bound at residue Arg127. The Zn(2+) site is built by Cys130 and Cys133. 136 to 137 (SY) is a binding site for ATP. 2 residues coordinate Zn(2+): Cys150 and Cys153. AMP contacts are provided by Arg160 and Arg171. Gln199 lines the ATP pocket.

The protein belongs to the adenylate kinase family. In terms of assembly, monomer.

Its subcellular location is the cytoplasm. The enzyme catalyses AMP + ATP = 2 ADP. It participates in purine metabolism; AMP biosynthesis via salvage pathway; AMP from ADP: step 1/1. In terms of biological role, catalyzes the reversible transfer of the terminal phosphate group between ATP and AMP. Plays an important role in cellular energy homeostasis and in adenine nucleotide metabolism. The chain is Adenylate kinase from Desulforamulus reducens (strain ATCC BAA-1160 / DSM 100696 / MI-1) (Desulfotomaculum reducens).